Here is a 391-residue protein sequence, read N- to C-terminus: Ferrochelatase (391 aa).

Residues His196 and Glu281 each contribute to the Fe cation site.

It belongs to the ferrochelatase family.

The protein localises to the cytoplasm. It catalyses the reaction heme b + 2 H(+) = protoporphyrin IX + Fe(2+). The protein operates within porphyrin-containing compound metabolism; protoheme biosynthesis; protoheme from protoporphyrin-IX: step 1/1. In terms of biological role, catalyzes the ferrous insertion into protoporphyrin IX. In Synechococcus sp. (strain WH7803), this protein is Ferrochelatase.